A 401-amino-acid chain; its full sequence is Ornithine aminotransferase (401 aa).

Lys-258 is subject to N6-(pyridoxal phosphate)lysine.

Belongs to the class-III pyridoxal-phosphate-dependent aminotransferase family. OAT subfamily. It depends on pyridoxal 5'-phosphate as a cofactor.

It is found in the cytoplasm. It catalyses the reaction a 2-oxocarboxylate + L-ornithine = L-glutamate 5-semialdehyde + an L-alpha-amino acid. Its pathway is amino-acid biosynthesis; L-proline biosynthesis; L-glutamate 5-semialdehyde from L-ornithine: step 1/1. Catalyzes the interconversion of ornithine to glutamate semialdehyde. This Bacillus subtilis (strain 168) protein is Ornithine aminotransferase.